The sequence spans 197 residues: Recombination protein RecR (197 aa).

The C4-type zinc finger occupies 56–71 (CQRCHSFSDEAVCPLC). One can recognise a Toprim domain in the interval 79–174 (TLLCVVETAA…KVTRLAQGVP (96 aa)).

It belongs to the RecR family.

May play a role in DNA repair. It seems to be involved in an RecBC-independent recombinational process of DNA repair. It may act with RecF and RecO. The polypeptide is Recombination protein RecR (Psychrobacter cryohalolentis (strain ATCC BAA-1226 / DSM 17306 / VKM B-2378 / K5)).